Here is a 430-residue protein sequence, read N- to C-terminus: Adenylosuccinate synthetase (430 aa).

GTP contacts are provided by residues 12 to 18 (GDEGKGK) and 40 to 42 (GHT). Asp13 (proton acceptor) is an active-site residue. Mg(2+)-binding residues include Asp13 and Gly40. IMP is bound by residues 13–16 (DEGK), 38–41 (NAGH), Thr128, Arg142, Gln223, Thr238, and Arg302. His41 (proton donor) is an active-site residue. Residue 298–304 (TTTGRPR) coordinates substrate. GTP is bound by residues Arg304, 330-332 (SID), and 412-414 (SVG).

Belongs to the adenylosuccinate synthetase family. Homodimer. The cofactor is Mg(2+).

The protein localises to the cytoplasm. It carries out the reaction IMP + L-aspartate + GTP = N(6)-(1,2-dicarboxyethyl)-AMP + GDP + phosphate + 2 H(+). Its pathway is purine metabolism; AMP biosynthesis via de novo pathway; AMP from IMP: step 1/2. Functionally, plays an important role in the de novo pathway of purine nucleotide biosynthesis. Catalyzes the first committed step in the biosynthesis of AMP from IMP. The chain is Adenylosuccinate synthetase from Streptococcus pyogenes serotype M2 (strain MGAS10270).